Reading from the N-terminus, the 140-residue chain is Nucleoside diphosphate kinase (140 aa).

ATP-binding residues include Lys-11, Phe-59, Arg-87, Thr-93, Arg-104, and Asn-114. His-117 functions as the Pros-phosphohistidine intermediate in the catalytic mechanism.

It belongs to the NDK family. As to quaternary structure, homotetramer. The cofactor is Mg(2+).

The protein localises to the cytoplasm. It carries out the reaction a 2'-deoxyribonucleoside 5'-diphosphate + ATP = a 2'-deoxyribonucleoside 5'-triphosphate + ADP. The catalysed reaction is a ribonucleoside 5'-diphosphate + ATP = a ribonucleoside 5'-triphosphate + ADP. Its function is as follows. Major role in the synthesis of nucleoside triphosphates other than ATP. The ATP gamma phosphate is transferred to the NDP beta phosphate via a ping-pong mechanism, using a phosphorylated active-site intermediate. This is Nucleoside diphosphate kinase from Cereibacter sphaeroides (strain ATCC 17029 / ATH 2.4.9) (Rhodobacter sphaeroides).